Reading from the N-terminus, the 208-residue chain is Uridine kinase (208 aa).

An ATP-binding site is contributed by 11-18 (GGTGSGKS).

Belongs to the uridine kinase family.

It localises to the cytoplasm. It catalyses the reaction uridine + ATP = UMP + ADP + H(+). The enzyme catalyses cytidine + ATP = CMP + ADP + H(+). It participates in pyrimidine metabolism; CTP biosynthesis via salvage pathway; CTP from cytidine: step 1/3. Its pathway is pyrimidine metabolism; UMP biosynthesis via salvage pathway; UMP from uridine: step 1/1. The chain is Uridine kinase from Clostridium novyi (strain NT).